The sequence spans 395 residues: GPI-anchor transamidase (395 aa).

The signal sequence occupies residues 1–27 (MVDTCFLSRGLTTLAGLLLLPFGSLAA). Over 28–368 (SQIEDQAEQF…PKLKDWHPPG (341 aa)) the chain is Lumenal. Ca(2+) is bound by residues Asp79, Ile82, Glu118, and Asp120. His164 serves as the catalytic Proton donor. Cys206 (nucleophile; acyl-thioester intermediate) is an active-site residue. Residues Cys206, Ser232, and Ser234 each contribute to the a protein site. An autoinhibitory loop region spans residues 231–236 (DSLSHQ). Cys275 and Cys280 are oxidised to a cystine. The chain crosses the membrane as a helical span at residues 369-385 (GFILGLWALIIMVFFKT). The Cytoplasmic portion of the chain corresponds to 386–395 (YGIKHMKFIF).

Belongs to the peptidase C13 family. Heteropentamer. Part of the GPI-anchor transamidase complex, consisting of PIGK, PIGT, PIGS, PIGU and GAA1. Interacts with GPAA1. Interacts with PIGT; this interaction, via a disulfide link, stabilizes the expression of GAA1 and PIGK and links them to PIGS. In terms of processing, the disulfide bond between PIGK/GPI8 and PIGT is important for normal enzyme activity.

It localises to the endoplasmic reticulum membrane. It participates in glycolipid biosynthesis; glycosylphosphatidylinositol-anchor biosynthesis. Its activity is regulated as follows. In the absence of proproteins substrates, exists in an inactive state with a disrupted catalytic site by an autoinhibitory loop. The binding of proprotein substrates, particularly the CSP region, to GPI-T triggers concerted conformational changes that alleviate the inhibition by the autoinhibitory loop. Meanwhile, proprotein residues near the omega- site induce the formation of a catalytic cleft for catalysis, following which the products are released and GPI-T reverts to the inactive state. Its function is as follows. Catalytic subunit of the glycosylphosphatidylinositol-anchor (GPI-anchor) transamidase (GPI-T) complex that catalyzes the formation of the linkage between a proprotein and a GPI-anchor and participates in GPI anchored protein biosynthesis. Recognizes diverse proproteins at a C-terminal signal peptide (CSP) region that lacks consensus sequence and replaces it with a GPI-anchor via a transamidation reaction. Transamidation catalysis reaction follows a two-phase mechanism. In the acyl-enzyme phase, the carbonyl group of the proproteins's omega-site undergoes a nucleophilic attack forming an enzyme-substrate thioester bond. Followed by a general acid catalysis that allows CSP releasing, regenerating the carbonyl, and forming the acyl-enzyme intermediate. In the GPI-anchor attachment phase, the amino group of the GPI-anchor's ethanolamine phosphate, the one on third mannose (EtNP3), mediates a nucleophilic attack on the carbonyl of the acyl-enzyme intermediate, replacing the CSP, allowing GPI-anchor attachment to the omega-residue, therefore forming the product and freeing the enzyme. This chain is GPI-anchor transamidase, found in Bos taurus (Bovine).